A 221-amino-acid chain; its full sequence is Probable septum site-determining protein MinC (221 aa).

The protein belongs to the MinC family. In terms of assembly, interacts with MinD and FtsZ.

Cell division inhibitor that blocks the formation of polar Z ring septums. Rapidly oscillates between the poles of the cell to destabilize FtsZ filaments that have formed before they mature into polar Z rings. Prevents FtsZ polymerization. This Shewanella woodyi (strain ATCC 51908 / MS32) protein is Probable septum site-determining protein MinC.